Consider the following 330-residue polypeptide: AH receptor-interacting protein (330 aa).

The PPIase FKBP-type domain maps to 31-121 (GTKATFHFRT…KDPLEGQRHC (91 aa)). Ser-43 carries the phosphoserine modification. TPR repeat units follow at residues 179-212 (VPVI…LKNL), 231-264 (TPLL…YDDN), and 265-298 (VKAY…DPAL).

In terms of assembly, interacts with RET in the pituitary gland; this interaction prevents the formation of the AIP-survivin complex.

Its subcellular location is the cytoplasm. In terms of biological role, may play a positive role in AHR-mediated (aromatic hydrocarbon receptor) signaling, possibly by influencing its receptivity for ligand and/or its nuclear targeting. This is AH receptor-interacting protein (Aip) from Mus musculus (Mouse).